Here is a 262-residue protein sequence, read N- to C-terminus: 3-deoxy-manno-octulosonate cytidylyltransferase (262 aa).

It belongs to the KdsB family.

It localises to the cytoplasm. It catalyses the reaction 3-deoxy-alpha-D-manno-oct-2-ulosonate + CTP = CMP-3-deoxy-beta-D-manno-octulosonate + diphosphate. The protein operates within nucleotide-sugar biosynthesis; CMP-3-deoxy-D-manno-octulosonate biosynthesis; CMP-3-deoxy-D-manno-octulosonate from 3-deoxy-D-manno-octulosonate and CTP: step 1/1. It participates in bacterial outer membrane biogenesis; lipopolysaccharide biosynthesis. Functionally, activates KDO (a required 8-carbon sugar) for incorporation into bacterial lipopolysaccharide in Gram-negative bacteria. The chain is 3-deoxy-manno-octulosonate cytidylyltransferase from Blochmanniella pennsylvanica (strain BPEN).